Consider the following 736-residue polypeptide: Protein DSF2 (736 aa).

The span at 1-10 shows a compositional bias: polar residues; that stretch reads MNQNLKNTSW. Disordered regions lie at residues 1–46, 178–208, 229–410, and 440–461; these read MNQN…DSQF, SGMK…SPNP, ISDN…SGEN, and FKTA…ARPN. The span at 14 to 24 shows a compositional bias: basic and acidic residues; that stretch reads IGSDDQERKAN. Polar residues-rich tracts occupy residues 25-46 and 197-208; these read SSEV…DSQF and ENGNRSTNSPNP. A compositionally biased stretch (low complexity) spans 238-256; sequence NNANSKNNRTTSNNINTST. The segment covering 264-284 has biased composition (polar residues); the sequence is KQSCPNEFTTTQKSNCLYRNG. Composition is skewed to low complexity over residues 285–294, 303–318, and 335–350; these read SSTSTNTSFS, KTQS…FSKL, and SNSS…TMTN. A compositionally biased stretch (basic residues) spans 374 to 385; sequence KLFKSPRTRAKN. Positions 392-410 are enriched in polar residues; it reads EGSSPIRSATNSLDFSGEN.

The sequence is that of Protein DSF2 (DSF2) from Saccharomyces cerevisiae (strain ATCC 204508 / S288c) (Baker's yeast).